We begin with the raw amino-acid sequence, 360 residues long: MLVWLAEHLVTFYSGFNVFSYLTFRAIVSLLTALFISLWMGPRMIARLQEMSFGQVVRNDGPESHFSKRGTPTMGGIMILTSITVSVLLWAYPSNPYVWCVLFVLVGYGIVGFVDDYRKVVRKDTKGLIARWKYFWQSAIALVVAFVMYMIGKDTPATELVVPFFKDVMPQLGLLYLLLAYFVIVGTSNAVNLTDGLDGLAIMPTVFVAAGFALVAWATGNVKFAEYLHIPYLRHAGELVIVCTAIVGAGLGFLWFNTYPAQVFMGDVGSLALGGALGTIAVLLRQEFLLVIMGGVFVVETLSVILQVGSFKLRGQRIFRMAPIHHHYELKGWPEPRVIVRFWIISLMLVLIGLATLKVR.

10 helical membrane passes run 26–46 (AIVSLLTALFISLWMGPRMIA), 72–92 (PTMGGIMILTSITVSVLLWAY), 94–114 (SNPYVWCVLFVLVGYGIVGFV), 132–152 (WKYFWQSAIALVVAFVMYMIG), 168–188 (VMPQLGLLYLLLAYFVIVGTS), 199–219 (GLAIMPTVFVAAGFALVAWAT), 236–256 (AGELVIVCTAIVGAGLGFLWF), 263–283 (VFMGDVGSLALGGALGTIAVL), 288–308 (FLLVIMGGVFVVETLSVILQV), and 338–358 (VIVRFWIISLMLVLIGLATLK).

This sequence belongs to the glycosyltransferase 4 family. MraY subfamily. Mg(2+) is required as a cofactor.

It is found in the cell inner membrane. The enzyme catalyses UDP-N-acetyl-alpha-D-muramoyl-L-alanyl-gamma-D-glutamyl-meso-2,6-diaminopimeloyl-D-alanyl-D-alanine + di-trans,octa-cis-undecaprenyl phosphate = di-trans,octa-cis-undecaprenyl diphospho-N-acetyl-alpha-D-muramoyl-L-alanyl-D-glutamyl-meso-2,6-diaminopimeloyl-D-alanyl-D-alanine + UMP. Its pathway is cell wall biogenesis; peptidoglycan biosynthesis. Functionally, catalyzes the initial step of the lipid cycle reactions in the biosynthesis of the cell wall peptidoglycan: transfers peptidoglycan precursor phospho-MurNAc-pentapeptide from UDP-MurNAc-pentapeptide onto the lipid carrier undecaprenyl phosphate, yielding undecaprenyl-pyrophosphoryl-MurNAc-pentapeptide, known as lipid I. The sequence is that of Phospho-N-acetylmuramoyl-pentapeptide-transferase from Erwinia tasmaniensis (strain DSM 17950 / CFBP 7177 / CIP 109463 / NCPPB 4357 / Et1/99).